Reading from the N-terminus, the 367-residue chain is Type II methyltransferase M.CviJI (367 aa).

An SAM-dependent MTase C5-type domain is found at 3–367 (FRTLELFAGI…EYLGYLVQYD (365 aa)). Residue C73 is part of the active site.

It belongs to the class I-like SAM-binding methyltransferase superfamily. C5-methyltransferase family.

The enzyme catalyses a 2'-deoxycytidine in DNA + S-adenosyl-L-methionine = a 5-methyl-2'-deoxycytidine in DNA + S-adenosyl-L-homocysteine + H(+). A methylase that recognizes the double-stranded sequence 5'-RGCY-3', methylates C-3 on both strands, and protects the DNA from cleavage by the CviJI endonuclease. The chain is Type II methyltransferase M.CviJI from Chlorella (PBCV-IL3A).